Here is a 251-residue protein sequence, read N- to C-terminus: Eukaryotic translation initiation factor 3 subunit K (251 aa).

In terms of domain architecture, PCI spans 46–224 (FDCYANLALL…VKVPTNKENE (179 aa)).

The protein belongs to the eIF-3 subunit K family. As to quaternary structure, component of the eukaryotic translation initiation factor 3 (eIF-3) complex.

The protein localises to the cytoplasm. Functionally, component of the eukaryotic translation initiation factor 3 (eIF-3) complex, which is involved in protein synthesis of a specialized repertoire of mRNAs and, together with other initiation factors, stimulates binding of mRNA and methionyl-tRNAi to the 40S ribosome. The eIF-3 complex specifically targets and initiates translation of a subset of mRNAs involved in cell proliferation. The polypeptide is Eukaryotic translation initiation factor 3 subunit K (Aspergillus oryzae (strain ATCC 42149 / RIB 40) (Yellow koji mold)).